Consider the following 117-residue polypeptide: NADH-ubiquinone oxidoreductase chain 3 (117 aa).

The next 3 helical transmembrane spans lie at 4 to 24 (IIFI…LASI), 60 to 80 (ITII…MIII), and 86 to 106 (IMIW…GLYH).

The protein belongs to the complex I subunit 3 family.

It localises to the mitochondrion membrane. The enzyme catalyses a ubiquinone + NADH + 5 H(+)(in) = a ubiquinol + NAD(+) + 4 H(+)(out). Functionally, core subunit of the mitochondrial membrane respiratory chain NADH dehydrogenase (Complex I) that is believed to belong to the minimal assembly required for catalysis. Complex I functions in the transfer of electrons from NADH to the respiratory chain. The immediate electron acceptor for the enzyme is believed to be ubiquinone. The sequence is that of NADH-ubiquinone oxidoreductase chain 3 (mt:ND3) from Drosophila melanogaster (Fruit fly).